The following is a 185-amino-acid chain: Ribosome-recycling factor (185 aa).

The protein belongs to the RRF family.

The protein localises to the cytoplasm. In terms of biological role, responsible for the release of ribosomes from messenger RNA at the termination of protein biosynthesis. May increase the efficiency of translation by recycling ribosomes from one round of translation to another. This is Ribosome-recycling factor from Shewanella sp. (strain MR-4).